The sequence spans 297 residues: Virulence genes transcriptional activator (297 aa).

Residues Met-1–Thr-61 enclose the HTH lysR-type domain. The segment at residues Phe-21–Ser-40 is a DNA-binding region (H-T-H motif).

This sequence belongs to the LysR transcriptional regulatory family.

The protein resides in the cytoplasm. In terms of biological role, positive regulator for the plasmid-encoded virulence factors SpvA, SpvB, and SpvC. The chain is Virulence genes transcriptional activator (mkaC) from Salmonella typhimurium (strain LT2 / SGSC1412 / ATCC 700720).